The following is a 381-amino-acid chain: E3 ubiquitin-protein ligase RNF13 (381 aa).

Positions 1 to 34 are cleaved as a signal peptide; that stretch reads MLLSIGMLMLSATQIYTIVTVQLFAFLNLLPVEA. Residues 35-182 lie on the Lumenal side of the membrane; that stretch reads DILAYNFENG…IPEFSLPLEY (148 aa). The PA domain maps to 64–160; the sequence is LKGFLINSKP…GEASANSLKE (97 aa). A glycan (N-linked (GlcNAc...) asparagine) is linked at asparagine 88. Residues 183 to 203 form a helical membrane-spanning segment; that stretch reads YLIPFLIIVGICLILIVIFMI. Residues 204 to 381 are Cytoplasmic-facing; that stretch reads TKFVQDRHRA…ERDYRVTNTV (178 aa). The segment at 240–282 adopts an RING-type; atypical zinc-finger fold; that stretch reads CAICLDEYEDGDKLRILPCSHAYHCKCVDPWLTKTKKTCPVCK. Residues 285–381 are disordered; that stretch reads VVPSQGDSDS…ERDYRVTNTV (97 aa). Composition is skewed to acidic residues over residues 292–305 and 339–353; these read SDSETDSSQEENEV and SEYEEDDNDNIDSSD. The span at 370–381 shows a compositional bias: basic and acidic residues; that stretch reads NDERDYRVTNTV.

As to expression, widely expressed (at protein level). Lowest levels in the liver, moderate levels in the heart, intestine and spleen, and high levels in skeletal muscle, kidney, proventriculus and brain. Also expressed in inner ear after noise exposure.

The protein localises to the endoplasmic reticulum membrane. Its subcellular location is the late endosome membrane. It is found in the lysosome membrane. It localises to the nucleus inner membrane. It catalyses the reaction S-ubiquitinyl-[E2 ubiquitin-conjugating enzyme]-L-cysteine + [acceptor protein]-L-lysine = [E2 ubiquitin-conjugating enzyme]-L-cysteine + N(6)-ubiquitinyl-[acceptor protein]-L-lysine.. Its pathway is protein modification; protein ubiquitination. Functionally, E3 ubiquitin-protein ligase that regulates cell proliferation. Involved in apoptosis regulation. Mediates ER stress-induced activation of JNK signaling pathway and apoptosis by promoting ERN1 activation and splicing of XBP1 mRNA. The polypeptide is E3 ubiquitin-protein ligase RNF13 (Gallus gallus (Chicken)).